A 336-amino-acid chain; its full sequence is Aspartate carbamoyltransferase catalytic subunit (336 aa).

R71 and T72 together coordinate carbamoyl phosphate. Position 99 (K99) interacts with L-aspartate. Residues R121, H151, and Q154 each contribute to the carbamoyl phosphate site. Residues R184 and R239 each contribute to the L-aspartate site. Residues G280 and P281 each coordinate carbamoyl phosphate.

Belongs to the aspartate/ornithine carbamoyltransferase superfamily. ATCase family. In terms of assembly, heterododecamer (2C3:3R2) of six catalytic PyrB chains organized as two trimers (C3), and six regulatory PyrI chains organized as three dimers (R2).

The enzyme catalyses carbamoyl phosphate + L-aspartate = N-carbamoyl-L-aspartate + phosphate + H(+). It participates in pyrimidine metabolism; UMP biosynthesis via de novo pathway; (S)-dihydroorotate from bicarbonate: step 2/3. Functionally, catalyzes the condensation of carbamoyl phosphate and aspartate to form carbamoyl aspartate and inorganic phosphate, the committed step in the de novo pyrimidine nucleotide biosynthesis pathway. This Azotobacter vinelandii (strain DJ / ATCC BAA-1303) protein is Aspartate carbamoyltransferase catalytic subunit.